A 140-amino-acid polypeptide reads, in one-letter code: Oleosin Cor a 13 (140 aa).

2 helical membrane passes run 31 to 51 (GSLL…LTLA) and 75 to 95 (GFLA…WIYR).

This sequence belongs to the oleosin family. In terms of tissue distribution, expressed in seeds.

It is found in the lipid droplet. It localises to the membrane. Its function is as follows. May have a structural role to stabilize the lipid body during desiccation of the seed by preventing coalescence of the oil. Probably interacts with both lipid and phospholipid moieties of lipid bodies. May also provide recognition signals for specific lipase anchorage in lipolysis during seedling growth. The chain is Oleosin Cor a 13 from Corylus avellana (European hazel).